We begin with the raw amino-acid sequence, 443 residues long: D(2) dopamine receptor (443 aa).

The Extracellular portion of the chain corresponds to 1-37 (MDPLNLSWYDDDLESQNWSRPFNGSEGKPGKPHYNYY). Asn-5, Asn-17, and Asn-23 each carry an N-linked (GlcNAc...) asparagine glycan. The helical transmembrane segment at 38 to 60 (AMLLTLLIFIIVFGNVLVCMAVS) threads the bilayer. The Cytoplasmic segment spans residues 61 to 70 (REKALQTTTN). Residues 71–93 (YLIVSLAVADLLVATLVMPWVVY) form a helical membrane-spanning segment. Over 94–108 (LEVVGEWKFSRIHCD) the chain is Extracellular. Cys-107 and Cys-182 form a disulfide bridge. A helical membrane pass occupies residues 109–130 (IFVTLDVMMCTASILNLCAISI). Topologically, residues 131–151 (DRYTAVAMPMLYNTRYSSKRR) are cytoplasmic. The helical transmembrane segment at 152-172 (VTVMIAIVWVLSFTISCPLLF) threads the bilayer. Residues 173 to 188 (GLNNTDQNECIIANPA) are Extracellular-facing. Residues 189–213 (FVVYSSIVSFYVPFIVTLLVYIKIY) traverse the membrane as a helical segment. The interval 211–373 (KIYIVLRRRR…SQQKEKKATQ (163 aa)) is interaction with PPP1R9B. Residues 214 to 373 (IVLRRRRKRV…SQQKEKKATQ (160 aa)) lie on the Cytoplasmic side of the membrane. A disordered region spans residues 282–332 (EMLSSTSPPERTRYSPIPPSHHQLTLPDPSHHGLHSTADSPAKPEKNGHAK). Residues 323–332 (AKPEKNGHAK) are compositionally biased toward basic and acidic residues. A helical transmembrane segment spans residues 374-395 (MLAIVLGVFIICWLPFFITHIL). At 396–409 (NIHCECNIPPVLYS) the chain is on the extracellular side. A disulfide bridge connects residues Cys-399 and Cys-401. A helical transmembrane segment spans residues 410 to 431 (AFTWLGYVNSAVNPIIYTTFNI). Residues 432–443 (EFRKAFLKILHC) lie on the Cytoplasmic side of the membrane. Cys-443 carries S-palmitoyl cysteine lipidation.

It belongs to the G-protein coupled receptor 1 family. As to quaternary structure, forms homo- and heterooligomers with DRD4. The interaction with DRD4 may modulate agonist-induced downstream signaling. Interacts with CADPS and CADPS2. Interacts with GPRASP1, PPP1R9B and CLIC6. Interacts with ARRB2. Interacts with HTR2A. Interacts with DRD1. Interacts with KCNA2. Palmitoylated. Palmitoylation which is required for proper localization to the plasma membrane and stability of the receptor could be carried on by ZDHHC4, ZDHHC3 and ZDHHC8.

It localises to the cell membrane. It is found in the golgi apparatus membrane. In terms of biological role, dopamine receptor whose activity is mediated by G proteins which inhibit adenylyl cyclase. Positively regulates postnatal regression of retinal hyaloid vessels via suppression of VEGFR2/KDR activity, downstream of OPN5. This is D(2) dopamine receptor (DRD2) from Canis lupus familiaris (Dog).